The chain runs to 1080 residues: Carbamoyl phosphate synthase large chain (1080 aa).

The segment at 1-403 is carboxyphosphate synthetic domain; sequence MPKRTDLKTI…SLQKALRGLE (403 aa). Residues Arg-129, Arg-169, Gly-175, Gly-176, Glu-208, Val-210, Glu-215, Gly-241, Val-242, His-243, Gln-285, and Glu-299 each coordinate ATP. One can recognise an ATP-grasp 1 domain in the interval 133-328; sequence RVAMGEIGLD…IAKVAAKLAV (196 aa). Residues Gln-285, Glu-299, and Asn-301 each coordinate Mg(2+). 3 residues coordinate Mn(2+): Gln-285, Glu-299, and Asn-301. The interval 404–554 is oligomerization domain; the sequence is TGKIGLDPTG…YSTYEDECEA (151 aa). The interval 555-942 is carbamoyl phosphate synthetic domain; that stretch reads LPSNRDKIMI…AFARAQEAGG (388 aa). The ATP-grasp 2 domain maps to 679-876; the sequence is QQLVDKLGLK…LAKIAARCMA (198 aa). ATP is bound by residues Arg-715, Arg-754, Leu-756, Glu-761, Gly-787, Val-788, His-789, Ser-790, Gln-830, and Glu-847. 3 residues coordinate Mg(2+): Gln-830, Glu-847, and Asn-849. Residues Gln-830, Glu-847, and Asn-849 each contribute to the Mn(2+) site. The region spanning 943-1080 is the MGS-like domain; that stretch reads IKAPPLGKAF…LQELHKELEA (138 aa). The tract at residues 943–1080 is allosteric domain; that stretch reads IKAPPLGKAF…LQELHKELEA (138 aa).

It belongs to the CarB family. Composed of two chains; the small (or glutamine) chain promotes the hydrolysis of glutamine to ammonia, which is used by the large (or ammonia) chain to synthesize carbamoyl phosphate. Tetramer of heterodimers (alpha,beta)4. The cofactor is Mg(2+). Mn(2+) is required as a cofactor.

The catalysed reaction is hydrogencarbonate + L-glutamine + 2 ATP + H2O = carbamoyl phosphate + L-glutamate + 2 ADP + phosphate + 2 H(+). It carries out the reaction hydrogencarbonate + NH4(+) + 2 ATP = carbamoyl phosphate + 2 ADP + phosphate + 2 H(+). Its pathway is amino-acid biosynthesis; L-arginine biosynthesis; carbamoyl phosphate from bicarbonate: step 1/1. It participates in pyrimidine metabolism; UMP biosynthesis via de novo pathway; (S)-dihydroorotate from bicarbonate: step 1/3. Its function is as follows. Large subunit of the glutamine-dependent carbamoyl phosphate synthetase (CPSase). CPSase catalyzes the formation of carbamoyl phosphate from the ammonia moiety of glutamine, carbonate, and phosphate donated by ATP, constituting the first step of 2 biosynthetic pathways, one leading to arginine and/or urea and the other to pyrimidine nucleotides. The large subunit (synthetase) binds the substrates ammonia (free or transferred from glutamine from the small subunit), hydrogencarbonate and ATP and carries out an ATP-coupled ligase reaction, activating hydrogencarbonate by forming carboxy phosphate which reacts with ammonia to form carbamoyl phosphate. The chain is Carbamoyl phosphate synthase large chain from Xanthomonas campestris pv. campestris (strain ATCC 33913 / DSM 3586 / NCPPB 528 / LMG 568 / P 25).